A 131-amino-acid polypeptide reads, in one-letter code: Small ribosomal subunit protein uS11 (131 aa).

The protein belongs to the universal ribosomal protein uS11 family. Part of the 30S ribosomal subunit. Interacts with proteins S7 and S18. Binds to IF-3.

Located on the platform of the 30S subunit, it bridges several disparate RNA helices of the 16S rRNA. Forms part of the Shine-Dalgarno cleft in the 70S ribosome. The sequence is that of Small ribosomal subunit protein uS11 from Chromobacterium violaceum (strain ATCC 12472 / DSM 30191 / JCM 1249 / CCUG 213 / NBRC 12614 / NCIMB 9131 / NCTC 9757 / MK).